We begin with the raw amino-acid sequence, 302 residues long: Cell division protein FtsQ (302 aa).

Over 1–43 the chain is Cytoplasmic; the sequence is MRPVDKKPVDRKIERETRYLRRDPAPSRWSYRYQRLMLTPAFR. A helical transmembrane segment spans residues 44 to 64; that stretch reads AGVRLGTPVIIIALAVAVVFG. The Periplasmic segment spans residues 65-302; that stretch reads RADSRDWIMG…SMPGRSAGRG (238 aa). In terms of domain architecture, POTRA spans 89-156; it reads FMVGSFAITG…GVLQIVIEER (68 aa).

This sequence belongs to the FtsQ/DivIB family. FtsQ subfamily.

The protein localises to the cell inner membrane. Its function is as follows. Essential cell division protein. The chain is Cell division protein FtsQ from Ketogulonicigenium vulgare (strain Y25).